A 73-amino-acid polypeptide reads, in one-letter code: Conotoxin Cl9.2 (73 aa).

The N-terminal stretch at 1–18 (MSKLVILAVLVLLPLVTA) is a signal peptide. Residues 19 to 41 (EHGRDEQAMQPEKKTMWTLWSLT) constitute a propeptide that is removed on maturation. Disulfide bonds link cysteine 46/cysteine 61, cysteine 52/cysteine 63, and cysteine 58/cysteine 72.

In terms of tissue distribution, expressed by the venom duct.

It localises to the secreted. This Californiconus californicus (California cone) protein is Conotoxin Cl9.2.